We begin with the raw amino-acid sequence, 454 residues long: Cathepsin C (454 aa).

Residues 1 to 20 form the signal peptide; sequence MHWVFHCILIILACLRFTCA. The propeptide occupies 21–217; that stretch reads DTPANCTYED…SKELISLTGN (197 aa). Asn-25 carries an N-linked (GlcNAc...) asparagine glycan. 3 disulfide bridges follow: Cys-26–Cys-107, Cys-244–Cys-287, and Cys-280–Cys-321. The active site involves Cys-247. Asn-265 carries N-linked (GlcNAc...) asparagine glycosylation. Residue Phe-291 participates in chloride binding. A glycan (N-linked (GlcNAc...) asparagine) is linked at Asn-326. Tyr-337 lines the chloride pocket. Catalysis depends on residues His-398 and Asn-420.

It belongs to the peptidase C1 family. Requires chloride as cofactor.

Its subcellular location is the lysosome. Functionally, thiol protease. Has a role as a digestive enzyme. The protein is Cathepsin C of Schistosoma mansoni (Blood fluke).